Consider the following 51-residue polypeptide: Putative antitoxin VapB6 (51 aa).

Antitoxin component of a possible type II toxin-antitoxin (TA) system. The cognate toxin is VapC6. The protein is Putative antitoxin VapB6 (vapB6) of Mycobacterium tuberculosis (strain CDC 1551 / Oshkosh).